The following is a 452-amino-acid chain: Isocitrate dehydrogenase [NADP], mitochondrial (452 aa).

The N-terminal 39 residues, 1–39, are a transit peptide targeting the mitochondrion; it reads MAGYLRAVSSLCRASGSARTWAPAALTVPSWPEQPRRHY. 4 positions are modified to N6-acetyllysine: K45, K48, K67, and K69. N6-acetyllysine; alternate is present on residues K80 and K106. K80 and K106 each carry N6-succinyllysine; alternate. Residues 115-117 and R122 contribute to the NADP(+) site; that span reads TIT. T117 contacts D-threo-isocitrate. D-threo-isocitrate contacts are provided by residues 134-140 and R149; that span reads SPNGTIR. K155 bears the N6-acetyllysine mark. An N6-acetyllysine; alternate modification is found at K166. K166 is modified (N6-succinyllysine; alternate). A D-threo-isocitrate-binding site is contributed by R172. N6-acetyllysine; alternate is present on residues K180 and K193. An N6-succinyllysine; alternate mark is found at K180 and K193. K199 carries the post-translational modification N6-acetyllysine. K256 carries the post-translational modification N6-acetyllysine; alternate. K256 is modified (N6-succinyllysine; alternate). An N6-acetyllysine mark is found at K263, K272, K275, and K280. At K282 the chain carries N6-acetyllysine; alternate. K282 is modified (N6-succinyllysine; alternate). D291 is a binding site for Mn(2+). An NADP(+)-binding site is contributed by K299. D314 provides a ligand contact to Mn(2+). NADP(+)-binding positions include 349-354 and N367; that span reads GTVTRH. The residue at position 384 (K384) is an N6-acetyllysine; alternate. The residue at position 384 (K384) is an N6-succinyllysine; alternate. N6-acetyllysine occurs at positions 400, 413, and 442.

Belongs to the isocitrate and isopropylmalate dehydrogenases family. As to quaternary structure, homodimer. Mg(2+) serves as cofactor. The cofactor is Mn(2+). Acetylation at Lys-413 dramatically reduces catalytic activity. Deacetylated by SIRT3. In terms of tissue distribution, predominantly expressed in heart, liver and kidney. Expressed in activated B lymphocytes.

It localises to the mitochondrion. It catalyses the reaction D-threo-isocitrate + NADP(+) = 2-oxoglutarate + CO2 + NADPH. Its function is as follows. Plays a role in intermediary metabolism and energy production. It may tightly associate or interact with the pyruvate dehydrogenase complex. The protein is Isocitrate dehydrogenase [NADP], mitochondrial (Idh2) of Mus musculus (Mouse).